A 242-amino-acid chain; its full sequence is ATP-dependent dethiobiotin synthetase BioD (242 aa).

12 to 17 contacts ATP; the sequence is EVGKTV. Thr16 is a binding site for Mg(2+). Lys37 is a catalytic residue. Ser41 provides a ligand contact to substrate. Residues Asp51 and 112-115 each bind ATP; that span reads EGAG. The Mg(2+) site is built by Asp51 and Glu112.

The protein belongs to the dethiobiotin synthetase family. Homodimer. Requires Mg(2+) as cofactor.

It is found in the cytoplasm. The enzyme catalyses (7R,8S)-7,8-diammoniononanoate + CO2 + ATP = (4R,5S)-dethiobiotin + ADP + phosphate + 3 H(+). The protein operates within cofactor biosynthesis; biotin biosynthesis; biotin from 7,8-diaminononanoate: step 1/2. Catalyzes a mechanistically unusual reaction, the ATP-dependent insertion of CO2 between the N7 and N8 nitrogen atoms of 7,8-diaminopelargonic acid (DAPA, also called 7,8-diammoniononanoate) to form a ureido ring. The chain is ATP-dependent dethiobiotin synthetase BioD from Bacillus thuringiensis subsp. konkukian (strain 97-27).